The chain runs to 86 residues: MATKKAGGSSRNGRDSAGRRLGVKKSDGQYVIPGNIIVRQRGTKIHPGINVGLGKDHTIFSLIEGRVEFLTKQSHKIVNVKEIANV.

Residues 1–26 (MATKKAGGSSRNGRDSAGRRLGVKKS) are disordered.

It belongs to the bacterial ribosomal protein bL27 family.

The sequence is that of Large ribosomal subunit protein bL27 from Rickettsia prowazekii (strain Madrid E).